A 259-amino-acid polypeptide reads, in one-letter code: Type III pantothenate kinase (259 aa).

6–13 lines the ATP pocket; the sequence is DVGNTNCT. 107-110 serves as a coordination point for substrate; it reads GSDR. The active-site Proton acceptor is the Asp109. Asp129 is a binding site for K(+). Thr132 is an ATP binding site. Substrate is bound at residue Thr184.

The protein belongs to the type III pantothenate kinase family. Homodimer. NH4(+) serves as cofactor. It depends on K(+) as a cofactor.

Its subcellular location is the cytoplasm. The enzyme catalyses (R)-pantothenate + ATP = (R)-4'-phosphopantothenate + ADP + H(+). It functions in the pathway cofactor biosynthesis; coenzyme A biosynthesis; CoA from (R)-pantothenate: step 1/5. In terms of biological role, catalyzes the phosphorylation of pantothenate (Pan), the first step in CoA biosynthesis. The protein is Type III pantothenate kinase of Listeria monocytogenes serotype 4b (strain CLIP80459).